The chain runs to 228 residues: Putative elongation factor Tu-like protein (228 aa).

The 207-residue stretch at 6-212 folds into the tr-type G domain; the sequence is KPHINVGTIG…LPIREKDNPF (207 aa). The interval 15–22 is G1; it reads GHVDHGKT. The G2 stretch occupies residues 59 to 63; the sequence is GITIS. The tract at residues 80 to 83 is G3; that stretch reads DCPG. The G4 stretch occupies residues 135–138; sequence NKCD. A G5 region spans residues 173–175; the sequence is SAV.

Belongs to the TRAFAC class translation factor GTPase superfamily. Classic translation factor GTPase family. EF-Tu/EF-1A subfamily.

The protein is Putative elongation factor Tu-like protein of Ehrlichia ruminantium (strain Welgevonden).